Here is a 290-residue protein sequence, read N- to C-terminus: 4-hydroxy-tetrahydrodipicolinate synthase (290 aa).

Pyruvate is bound at residue Thr-44. Tyr-132 (proton donor/acceptor) is an active-site residue. The Schiff-base intermediate with substrate role is filled by Lys-160. Ile-202 contacts pyruvate.

Belongs to the DapA family. Homotetramer; dimer of dimers.

It is found in the cytoplasm. The enzyme catalyses L-aspartate 4-semialdehyde + pyruvate = (2S,4S)-4-hydroxy-2,3,4,5-tetrahydrodipicolinate + H2O + H(+). The protein operates within amino-acid biosynthesis; L-lysine biosynthesis via DAP pathway; (S)-tetrahydrodipicolinate from L-aspartate: step 3/4. Catalyzes the condensation of (S)-aspartate-beta-semialdehyde [(S)-ASA] and pyruvate to 4-hydroxy-tetrahydrodipicolinate (HTPA). This chain is 4-hydroxy-tetrahydrodipicolinate synthase, found in Geobacter sulfurreducens (strain ATCC 51573 / DSM 12127 / PCA).